A 654-amino-acid polypeptide reads, in one-letter code: Fructose-1,6-bisphosphatase class 3 (654 aa).

The segment at 288–307 is disordered; it reads NPAFKPKKRPDKHERLTQRE. The segment covering 298–307 has biased composition (basic and acidic residues); it reads DKHERLTQRE.

The protein belongs to the FBPase class 3 family. It depends on Mn(2+) as a cofactor.

It catalyses the reaction beta-D-fructose 1,6-bisphosphate + H2O = beta-D-fructose 6-phosphate + phosphate. It participates in carbohydrate biosynthesis; gluconeogenesis. The polypeptide is Fructose-1,6-bisphosphatase class 3 (Staphylococcus aureus (strain MRSA252)).